A 467-amino-acid chain; its full sequence is MKITVNRGLDLSLQGSPKESGFYNKIDPEFVSIDLRPFQPLSLKLKVEQGDAVCSGAPIAEYKHFPNTYITSHVSGVVTAIRRGNKRSLLDVIIKKTPGPTSTEYTYDLQTLSRSDLSEIFKENGLFALIKQRPFDIPAIPTQTPRDVFINLADNRPFTPSPEKHLALFSSREEGFYVFVVGVRAIAKLFGLRPHIVFRDRLTLPTQELKTIAHLHTVSGPFPSGSPSIHIHSVAPITNEKEVVFTLSFQDVLTIGHLFLKGRILHEQVTALAGTALKSSLRRYVITTKGASFSSLINLNDISDNDTLISGDPLTGRLCKKEEEPFLGFRDHSISVLHNPTKRELFSFLRIGFNKPTFTKTYLSGFFKKKRTYTNPDTNLHGETRPIIDTDIYDKVMPMRIPVVPLIKAVITKNFDLANELGFLEVCGEDFALPTLIDPSKTEMLTIVKESLIEYAKESGILTPHQD.

This sequence belongs to the NqrA family. Composed of six subunits; NqrA, NqrB, NqrC, NqrD, NqrE and NqrF.

It carries out the reaction a ubiquinone + n Na(+)(in) + NADH + H(+) = a ubiquinol + n Na(+)(out) + NAD(+). Functionally, NQR complex catalyzes the reduction of ubiquinone-1 to ubiquinol by two successive reactions, coupled with the transport of Na(+) ions from the cytoplasm to the periplasm. NqrA to NqrE are probably involved in the second step, the conversion of ubisemiquinone to ubiquinol. In Chlamydia pneumoniae (Chlamydophila pneumoniae), this protein is Na(+)-translocating NADH-quinone reductase subunit A.